Here is a 342-residue protein sequence, read N- to C-terminus: Large ribosomal subunit protein uL10 (342 aa).

The required for interaction with ribosomal protein L12 dimers stretch occupies residues 212–342 (EYIDMLQKAY…ALAGLSALFG (131 aa)). The segment covering 299-308 (QAQVAVATQP) has biased composition (polar residues). The disordered stretch occupies residues 299–342 (QAQVAVATQPSEEEKKEEEKTEEEEKEEEASEEEALAGLSALFG). A compositionally biased stretch (acidic residues) spans 318–333 (KTEEEEKEEEASEEEA).

Belongs to the universal ribosomal protein uL10 family. In terms of assembly, part of the 50S ribosomal subunit, binds large rRNA. Forms the ribosomal stalk which helps the ribosome interact with GTP-bound translation factors. Forms a heptameric L10(L12)2(L12)2(L12)2 complex, where L10 forms an elongated spine to which the L12 dimers bind in a sequential fashion.

Functionally, forms the large subunit's ribosomal stalk, playing a central role in the interaction of the ribosome with elongation factors; the stalk complex of P.horikoshii binds to E.coli large subunits and confers on them the ability to interact with eukaryotic elongation factors. Each succesive L12 dimer bound along the P0 spine increases the GTPase activity of elongation factors and increases translation by reconsituted ribosomes, although the first site is the most stimulatory. This is Large ribosomal subunit protein uL10 from Pyrococcus horikoshii (strain ATCC 700860 / DSM 12428 / JCM 9974 / NBRC 100139 / OT-3).